The chain runs to 392 residues: Phospho-N-acetylmuramoyl-pentapeptide-transferase (392 aa).

The next 10 membrane-spanning stretches (helical) occupy residues 28–48, 74–94, 100–120, 137–157, 193–213, 225–245, 262–282, 289–309, 314–334, and 369–389; these read RALMAALTALVVGLVAGPYVI, TPTMGGVLVLFAIAFATLMWF, FVWIVLWVTLGFGAIGWVDDW, YFWQSVVGLIAGFYLLFSISE, VSYPLGGIGFVILTYLVIVGA, GLAIMPVVMVGSALGVFAYVT, SGELLVFCSAMAGAGLAFLWF, VFMGDVGALALGGALGTIAVI, IVFFIMGGIFVVEAISVMAQV, and QVVVRFWIITMLLCLIGLSTL.

Belongs to the glycosyltransferase 4 family. MraY subfamily. It depends on Mg(2+) as a cofactor.

It localises to the cell inner membrane. The catalysed reaction is UDP-N-acetyl-alpha-D-muramoyl-L-alanyl-gamma-D-glutamyl-meso-2,6-diaminopimeloyl-D-alanyl-D-alanine + di-trans,octa-cis-undecaprenyl phosphate = di-trans,octa-cis-undecaprenyl diphospho-N-acetyl-alpha-D-muramoyl-L-alanyl-D-glutamyl-meso-2,6-diaminopimeloyl-D-alanyl-D-alanine + UMP. Its pathway is cell wall biogenesis; peptidoglycan biosynthesis. In terms of biological role, catalyzes the initial step of the lipid cycle reactions in the biosynthesis of the cell wall peptidoglycan: transfers peptidoglycan precursor phospho-MurNAc-pentapeptide from UDP-MurNAc-pentapeptide onto the lipid carrier undecaprenyl phosphate, yielding undecaprenyl-pyrophosphoryl-MurNAc-pentapeptide, known as lipid I. The protein is Phospho-N-acetylmuramoyl-pentapeptide-transferase of Variovorax paradoxus (strain S110).